We begin with the raw amino-acid sequence, 286 residues long: Elongation factor Ts (286 aa).

The interval 82–85 (TDFV) is involved in Mg(2+) ion dislocation from EF-Tu.

The protein belongs to the EF-Ts family.

The protein localises to the cytoplasm. Associates with the EF-Tu.GDP complex and induces the exchange of GDP to GTP. It remains bound to the aminoacyl-tRNA.EF-Tu.GTP complex up to the GTP hydrolysis stage on the ribosome. This Desulfovibrio desulfuricans (strain ATCC 27774 / DSM 6949 / MB) protein is Elongation factor Ts.